We begin with the raw amino-acid sequence, 110 residues long: Evasin P1166 (110 aa).

An N-terminal signal peptide occupies residues 1–24; it reads MEVKIFTLLQIALFIALGIHLVVA. Cystine bridges form between Cys-45-Cys-67, Cys-49-Cys-69, and Cys-60-Cys-80. Asn-48 carries an N-linked (GlcNAc...) asparagine glycan. The interval 89–110 is disordered; that stretch reads SEYPNPKSSEIDAAAPLPRETH.

The protein localises to the secreted. Salivary chemokine-binding protein which binds to host chemokines CXCL1, CXCL2 and CXCL8. In Ixodes ricinus (Common tick), this protein is Evasin P1166.